The following is a 260-amino-acid chain: Carbonic anhydrase 2 (260 aa).

Serine 2 carries the N-acetylserine modification. The residue at position 2 (serine 2) is a Phosphoserine. An Alpha-carbonic anhydrase domain is found at 3 to 259 (HHWGYGEHNG…LKNRQVRVFP (257 aa)). Histidine 64 functions as the Proton donor/acceptor in the catalytic mechanism. Residues histidine 94, histidine 96, and histidine 119 each contribute to the Zn(2+) site. Residues serine 165 and serine 172 each carry the phosphoserine modification. 198 to 199 (TN) is a binding site for substrate.

Belongs to the alpha-carbonic anhydrase family. As to quaternary structure, interacts with SLC4A4 and SLC26A6. Interaction with SLC4A7 regulates SLC4A7 transporter activity. Zn(2+) is required as a cofactor.

Its subcellular location is the cytoplasm. The protein resides in the cell membrane. It catalyses the reaction hydrogencarbonate + H(+) = CO2 + H2O. It carries out the reaction urea = cyanamide + H2O. Its activity is regulated as follows. Inhibited by acetazolamide. Functionally, catalyzes the reversible hydration of carbon dioxide. Can also hydrate cyanamide to urea. Involved in the regulation of fluid secretion into the anterior chamber of the eye. Essential for bone resorption and osteoclast differentiation. Contributes to intracellular pH regulation in the duodenal upper villous epithelium during proton-coupled peptide absorption. Stimulates the chloride-bicarbonate exchange activity of SLC26A6. This Ovis aries (Sheep) protein is Carbonic anhydrase 2 (CA2).